A 294-amino-acid polypeptide reads, in one-letter code: Putative maltodextrin utilization protein YvdJ (294 aa).

Transmembrane regions (helical) follow at residues 35-55 (LSFLFLFLTACLMAPLAVSFV), 184-204 (MIMMLAYTVVSMIQLLLTFVL), 228-248 (IAICASALPAFAAAAIGMVHF), and 249-269 (DLITVLMIHSCGVTLMISFAF).

The protein resides in the cell membrane. Could have a role in maltodextrin utilization. The protein is Putative maltodextrin utilization protein YvdJ (yvdJ) of Bacillus subtilis (strain 168).